The sequence spans 160 residues: Bcl-2-like gene 16 protein (160 aa).

Positions 64 to 84 match the BH1 motif; the sequence is LLTTEHTTNWGKVVAMLSFSA.

Belongs to the Bcl-2 family.

In Saimiri sciureus (Common squirrel monkey), this protein is Bcl-2-like gene 16 protein (16).